The primary structure comprises 306 residues: Foldase protein PrsA (306 aa).

Positions 1–20 are cleaved as a signal peptide; it reads MRRKIALFLALIFVGVSLVS. Residue Cys-21 is the site of N-palmitoyl cysteine attachment. Residue Cys-21 is the site of S-diacylglycerol cysteine attachment. In terms of domain architecture, PpiC spans 165 to 255; that stretch reads FEVMRARHIL…YGYHIIKSEG (91 aa).

This sequence belongs to the PrsA family.

Its subcellular location is the cell membrane. The catalysed reaction is [protein]-peptidylproline (omega=180) = [protein]-peptidylproline (omega=0). Plays a major role in protein secretion by helping the post-translocational extracellular folding of several secreted proteins. The chain is Foldase protein PrsA from Caldanaerobacter subterraneus subsp. tengcongensis (strain DSM 15242 / JCM 11007 / NBRC 100824 / MB4) (Thermoanaerobacter tengcongensis).